The primary structure comprises 198 residues: NAD(P)H dehydrogenase (quinone) (198 aa).

In terms of domain architecture, Flavodoxin-like spans 4–189 (ILVLYYSMYG…SIARYQGEYV (186 aa)). FMN contacts are provided by residues 10–15 (SMYGHI) and 78–80 (TRF). An NAD(+)-binding site is contributed by Tyr12. Trp98 lines the substrate pocket. FMN contacts are provided by residues 113-118 (STGTGG) and His133.

The protein belongs to the WrbA family. FMN serves as cofactor.

It catalyses the reaction a quinone + NADH + H(+) = a quinol + NAD(+). The catalysed reaction is a quinone + NADPH + H(+) = a quinol + NADP(+). The sequence is that of NAD(P)H dehydrogenase (quinone) from Salmonella paratyphi A (strain ATCC 9150 / SARB42).